The sequence spans 86 residues: Large ribosomal subunit protein uL23 (86 aa).

Belongs to the universal ribosomal protein uL23 family. Part of the 50S ribosomal subunit. Contacts protein L29.

In terms of biological role, binds to 23S rRNA. One of the proteins that surrounds the polypeptide exit tunnel on the outside of the ribosome. This Thermococcus kodakarensis (strain ATCC BAA-918 / JCM 12380 / KOD1) (Pyrococcus kodakaraensis (strain KOD1)) protein is Large ribosomal subunit protein uL23.